The following is a 362-amino-acid chain: G-protein coupled receptor 6 (362 aa).

The Extracellular segment spans residues 1–74 (MNASAASLND…PGLLLPAVNP (74 aa)). N-linked (GlcNAc...) asparagine glycosylation is found at Asn-2, Asn-9, and Asn-51. Residues 75 to 94 (WDVLLCVSGTVIAGENALVV) form a helical membrane-spanning segment. Residues 95-106 (ALIASTPALRTP) lie on the Cytoplasmic side of the membrane. The chain crosses the membrane as a helical span at residues 107-130 (MFVLVGSLATADLLAGCGLILHFV). Over 131-142 (FQYLVPSETVSL) the chain is Extracellular. A helical membrane pass occupies residues 143–164 (LTVGFLVASFAASVSSLLAITV). Residues 165–185 (DRYLSLYNALTYYSRRTLLGV) lie on the Cytoplasmic side of the membrane. Residues 186-205 (HLLLAATWTVSLGLGLLPVL) traverse the membrane as a helical segment. Residues 206–230 (GWNCLAERAACSVVRPLARSHVALL) lie on the Extracellular side of the membrane. The chain crosses the membrane as a helical span at residues 231 to 249 (SAAFFMVFGIMLHLYVRIC). Over 250–277 (QVVWRHAHQIALQQHCLAPPHLAATRKG) the chain is Cytoplasmic. The chain crosses the membrane as a helical span at residues 278–304 (VGTLAVVLGTFGASWLPFAIYCVVGSH). Over 305–309 (EDPAV) the chain is Extracellular. The chain crosses the membrane as a helical span at residues 310–331 (YTYATLLPATYNSMINPIIYAF). At 332–362 (RNQEIQRALWLLLCGCFQSKVPFRSRSPSEV) the chain is on the cytoplasmic side. Cys-345 carries the S-palmitoyl cysteine lipid modification. Residues Ser-356, Ser-358, and Ser-360 each carry the phosphoserine modification.

It belongs to the G-protein coupled receptor 1 family.

The protein resides in the cell membrane. Functionally, orphan receptor with constitutive G(s) signaling activity that activate cyclic AMP. Promotes neurite outgrowth and blocks myelin inhibition in neurons. The chain is G-protein coupled receptor 6 (GPR6) from Homo sapiens (Human).